We begin with the raw amino-acid sequence, 149 residues long: UPF0179 protein rrnAC1064 (149 aa).

Belongs to the UPF0179 family.

The chain is UPF0179 protein rrnAC1064 from Haloarcula marismortui (strain ATCC 43049 / DSM 3752 / JCM 8966 / VKM B-1809) (Halobacterium marismortui).